The following is a 487-amino-acid chain: UPF0324 membrane protein NE0724 (487 aa).

Helical transmembrane passes span 19 to 38 (WAVWLGLIMFMASVSSLWGW), 71 to 93 (PALSLLVTYLVFTALTCLAAWSM), 100 to 119 (FFIGWTILFIMTWVIWIIGN), 139 to 161 (LSLGSGFSYLLALLVGLVIGNFF), 181 to 200 (AIVFLGIKIGVMSIEAAGFI), 204 to 226 (VMTGVAATFVAYMLFWPIVYALG), 269 to 291 (VSILVVIFAMFELIILPGFYTAI), 350 to 369 (IWIDMFIGVWAFVLALVWVY), 389 to 411 (FPKFVLGYLLVWFSYIMLASSGS), 426 to 443 (GPMRNMMFMLTFISIGII), and 456 to 478 (ALLYAIALFGIIAPIAYGVAWIF).

The protein belongs to the UPF0324 family.

The protein localises to the cell membrane. This chain is UPF0324 membrane protein NE0724, found in Nitrosomonas europaea (strain ATCC 19718 / CIP 103999 / KCTC 2705 / NBRC 14298).